Reading from the N-terminus, the 703-residue chain is Methionine--tRNA ligase (703 aa).

Residues 12-22 carry the 'HIGH' region motif; that stretch reads PYANGPLHIGH. Zn(2+) contacts are provided by Cys143, Cys146, Cys156, and Cys159. Residues 331–335 carry the 'KMSKS' region motif; it reads KMSKT. Residue Lys334 participates in ATP binding. Composition is skewed to low complexity over residues 556 to 568 and 577 to 594; these read AAPQAAEARPAKG and EAPAATQAAAPSAGAAES. Disordered regions lie at residues 556–594 and 682–703; these read AAPQAAEARPAKGAKTEKKPAEAPAATQAAAPSAGAAES and GPGGKELSLLDPGDVAPGSEVK. Residues 602–703 form the tRNA-binding domain; that stretch reads DFAKVVLKAG…GDVAPGSEVK (102 aa).

This sequence belongs to the class-I aminoacyl-tRNA synthetase family. MetG type 1 subfamily. Homodimer. Zn(2+) is required as a cofactor.

It localises to the cytoplasm. It carries out the reaction tRNA(Met) + L-methionine + ATP = L-methionyl-tRNA(Met) + AMP + diphosphate. Functionally, is required not only for elongation of protein synthesis but also for the initiation of all mRNA translation through initiator tRNA(fMet) aminoacylation. The chain is Methionine--tRNA ligase from Myxococcus xanthus (strain DK1622).